The sequence spans 200 residues: Histone chaperone asf1b (200 aa).

It belongs to the ASF1 family. In terms of assembly, interacts with histone H3 and histone H4.

It localises to the nucleus. Histone chaperone that facilitates histone deposition and histone exchange and removal during nucleosome assembly and disassembly. The polypeptide is Histone chaperone asf1b (asf1b) (Xenopus tropicalis (Western clawed frog)).